Consider the following 692-residue polypeptide: Threonine--tRNA ligase (692 aa).

A disordered region spans residues 1–20 (MSAPAQPAPGVDGGDPSQAR). Positions 1–74 (MSAPAQPAPG…DVDTDITPVA (74 aa)) constitute a TGS domain. The catalytic stretch occupies residues 269–575 (DHRKLGVELD…LTEHYAGAFP (307 aa)). 3 residues coordinate Zn(2+): Cys-374, His-425, and His-552.

The protein belongs to the class-II aminoacyl-tRNA synthetase family. Homodimer. The cofactor is Zn(2+).

Its subcellular location is the cytoplasm. The enzyme catalyses tRNA(Thr) + L-threonine + ATP = L-threonyl-tRNA(Thr) + AMP + diphosphate + H(+). Catalyzes the attachment of threonine to tRNA(Thr) in a two-step reaction: L-threonine is first activated by ATP to form Thr-AMP and then transferred to the acceptor end of tRNA(Thr). Also edits incorrectly charged L-seryl-tRNA(Thr). The protein is Threonine--tRNA ligase of Mycobacterium tuberculosis (strain CDC 1551 / Oshkosh).